The primary structure comprises 162 residues: Protein NrdI (162 aa).

It belongs to the NrdI family.

Its function is as follows. Probably involved in ribonucleotide reductase function. In Streptococcus pyogenes serotype M1, this protein is Protein NrdI.